The following is a 408-amino-acid chain: UV excision repair protein RAD23 homolog B (408 aa).

In terms of domain architecture, Ubiquitin-like spans 1 to 79 (MLVTLKTLQQ…VVVMVTKPKA (79 aa)). Positions 80–111 (VTTPAPATTQQSNSAATTTVSSSTAPAVTQAP) are enriched in low complexity. The disordered stretch occupies residues 80-176 (VTTPAPATTQ…TSGDSSRSNL (97 aa)). Over residues 112-122 (APAPASAPTPT) the composition is skewed to pro residues. Residues 123-143 (PVSVTPAPTTASSEPAPASAA) are compositionally biased toward low complexity. Residues 144–153 (KQEKPAERPV) are compositionally biased toward basic and acidic residues. Residues 154–174 (ETPVATTPTSTDSTSGDSSRS) show a composition bias toward low complexity. Thr155 and Thr164 each carry phosphothreonine. A Phosphoserine modification is found at Ser174. Position 186 is a phosphothreonine (Thr186). Positions 188-228 (QSYENMVTEIMSMGYEREQVIAALRASFNNPDRAVEYLLMG) constitute a UBA 1 domain. Ser199 bears the Phosphoserine mark. Residue Tyr202 is modified to Phosphotyrosine. Residues 236-274 (QAVVDPPPAASTGAPQSSVAAAAATTTATTTTTSSGGHP) form a disordered region. Positions 255–268 (AAAAATTTATTTTT) are enriched in low complexity. Positions 273-316 (HPLEFLRNQPQFQQMRQIIQQNPSLLPALLQQIGRENPQLLQQI) constitute an STI1 domain. Residues 363–403 (PQEKEAIERLKALGFPEGLVIQAYFACEKNENLAANFLLQQ) form the UBA 2 domain.

This sequence belongs to the RAD23 family. As to quaternary structure, component of the XPC complex composed of XPC, RAD23B and CETN2. Interacts with NGLY1 and PSMC1. Interacts with ATXN3. Interacts with PSMD4 and PSMC5. Interacts with AMFR. Interacts with VCP; the interaction is indirect and mediated by NGLY1.

It is found in the nucleus. It localises to the cytoplasm. Functionally, multiubiquitin chain receptor involved in modulation of proteasomal degradation. Binds to polyubiquitin chains. Proposed to be capable to bind simultaneously to the 26S proteasome and to polyubiquitinated substrates and to deliver ubiquitinated proteins to the proteasome. May play a role in endoplasmic reticulum-associated degradation (ERAD) of misfolded glycoproteins by association with PNGase and delivering deglycosylated proteins to the proteasome. In terms of biological role, involved in global genome nucleotide excision repair (GG-NER) by acting as component of the XPC complex. Cooperatively with CETN2 appears to stabilize XPC. May protect XPC from proteasomal degradation. The XPC complex is proposed to represent the first factor bound at the sites of DNA damage and together with other core recognition factors, XPA, RPA and the TFIIH complex, is part of the pre-incision (or initial recognition) complex. The XPC complex recognizes a wide spectrum of damaged DNA characterized by distortions of the DNA helix such as single-stranded loops, mismatched bubbles or single-stranded overhangs. The orientation of XPC complex binding appears to be crucial for inducing a productive NER. XPC complex is proposed to recognize and to interact with unpaired bases on the undamaged DNA strand which is followed by recruitment of the TFIIH complex and subsequent scanning for lesions in the opposite strand in a 5'-to-3' direction by the NER machinery. Cyclobutane pyrimidine dimers (CPDs) which are formed upon UV-induced DNA damage esacpe detection by the XPC complex due to a low degree of structural perurbation. Instead they are detected by the UV-DDB complex which in turn recruits and cooperates with the XPC complex in the respective DNA repair. In vitro, the XPC:RAD23B dimer is sufficient to initiate NER; it preferentially binds to cisplatin and UV-damaged double-stranded DNA and also binds to a variety of chemically and structurally diverse DNA adducts. XPC:RAD23B contacts DNA both 5' and 3' of a cisplatin lesion with a preference for the 5' side. XPC:RAD23B induces a bend in DNA upon binding. XPC:RAD23B stimulates the activity of DNA glycosylases TDG and SMUG1. This chain is UV excision repair protein RAD23 homolog B (RAD23B), found in Bos taurus (Bovine).